Here is a 239-residue protein sequence, read N- to C-terminus: Transcriptional regulatory protein RstA (239 aa).

The Response regulatory domain occupies 3–116; sequence TIVFVEDDAE…VLLARLRLHL (114 aa). Asp52 carries the post-translational modification 4-aspartylphosphate. The segment at residues 136–235 is a DNA-binding region (ompR/PhoB-type); the sequence is YKALHFGTLT…VRNKGYLFAP (100 aa).

Post-translationally, phosphorylated by RstB.

It is found in the cytoplasm. Its function is as follows. Member of the two-component regulatory system RstB/RstA. The polypeptide is Transcriptional regulatory protein RstA (rstA) (Escherichia coli (strain K12)).